Reading from the N-terminus, the 357-residue chain is 3-dehydroquinate synthase (357 aa).

Residues 99–103, 123–124, Lys135, Lys144, and 162–165 each bind NAD(+); these read GATGD, TT, and FLET. Zn(2+)-binding residues include Glu177, His247, and His261.

It belongs to the sugar phosphate cyclases superfamily. Dehydroquinate synthase family. Requires Co(2+) as cofactor. The cofactor is Zn(2+). NAD(+) is required as a cofactor.

The protein localises to the cytoplasm. It carries out the reaction 7-phospho-2-dehydro-3-deoxy-D-arabino-heptonate = 3-dehydroquinate + phosphate. It participates in metabolic intermediate biosynthesis; chorismate biosynthesis; chorismate from D-erythrose 4-phosphate and phosphoenolpyruvate: step 2/7. In terms of biological role, catalyzes the conversion of 3-deoxy-D-arabino-heptulosonate 7-phosphate (DAHP) to dehydroquinate (DHQ). The polypeptide is 3-dehydroquinate synthase (Macrococcus caseolyticus (strain JCSC5402) (Macrococcoides caseolyticum)).